A 193-amino-acid polypeptide reads, in one-letter code: tRNA(Phe) 7-((3-amino-3-carboxypropyl)-4-demethylwyosine(37)-N(4))-methyltransferase (193 aa).

The protein belongs to the TYW3 family.

It catalyses the reaction 4-demethyl-7-[(3S)-3-amino-3-carboxypropyl]wyosine(37) in tRNA(Phe) + S-adenosyl-L-methionine = 7-[(3S)-3-amino-3-carboxypropyl]wyosine(37) in tRNA(Phe) + S-adenosyl-L-homocysteine + H(+). S-adenosyl-L-methionine-dependent methyltransferase that acts as a component of the wyosine derivatives biosynthesis pathway. Probably methylates N-4 position of wybutosine-86 to produce wybutosine-72. The sequence is that of tRNA(Phe) 7-((3-amino-3-carboxypropyl)-4-demethylwyosine(37)-N(4))-methyltransferase from Methanocaldococcus jannaschii (strain ATCC 43067 / DSM 2661 / JAL-1 / JCM 10045 / NBRC 100440) (Methanococcus jannaschii).